The following is a 223-amino-acid chain: Adenine phosphoribosyltransferase (223 aa).

It belongs to the purine/pyrimidine phosphoribosyltransferase family. Homodimer.

It localises to the cytoplasm. The enzyme catalyses AMP + diphosphate = 5-phospho-alpha-D-ribose 1-diphosphate + adenine. It functions in the pathway purine metabolism; AMP biosynthesis via salvage pathway; AMP from adenine: step 1/1. Its function is as follows. Catalyzes a salvage reaction resulting in the formation of AMP, that is energically less costly than de novo synthesis. The polypeptide is Adenine phosphoribosyltransferase (Mycobacterium bovis (strain ATCC BAA-935 / AF2122/97)).